The chain runs to 461 residues: GTPase Der (461 aa).

2 EngA-type G domains span residues 2 to 164 and 197 to 368; these read QKII…EDDV and IRVG…KNFT. GTP is bound by residues 8–15, 55–59, 116–119, 203–210, 250–254, and 314–317; these read GKPNVGKS, DSGGL, NKID, GRVNVGKS, DTAGI, and NKWD. The region spanning 369–453 is the KH-like domain; the sequence is QKIQTSKLNE…PIVLAPKKRG (85 aa).

The protein belongs to the TRAFAC class TrmE-Era-EngA-EngB-Septin-like GTPase superfamily. EngA (Der) GTPase family. Associates with the 50S ribosomal subunit.

Its function is as follows. GTPase that plays an essential role in the late steps of ribosome biogenesis. In Campylobacter curvus (strain 525.92), this protein is GTPase Der.